Reading from the N-terminus, the 433-residue chain is Metacaspase-1 (433 aa).

The disordered stretch occupies residues 1 to 123 (MYPGRAKPTY…PPSQVQHTGP (123 aa)). Positions 9–44 (TYNNQQAQQAQSQVGYQTGYSNAQPQQQYYTAPQQQ) are enriched in low complexity. Composition is skewed to polar residues over residues 45–55 (NVSGSSMSFQH) and 83–109 (QQNY…QQPQ). Residues histidine 222 and cysteine 278 contribute to the active site.

Belongs to the peptidase C14B family.

Involved in cell death (apoptosis). The polypeptide is Metacaspase-1 (MCA1) (Kluyveromyces lactis (strain ATCC 8585 / CBS 2359 / DSM 70799 / NBRC 1267 / NRRL Y-1140 / WM37) (Yeast)).